A 161-amino-acid polypeptide reads, in one-letter code: NADH-quinone oxidoreductase subunit I (161 aa).

2 4Fe-4S ferredoxin-type domains span residues 52–82 and 92–121; these read LRRYPNGEERCIACKLCEAVCPALAITIESE and KRYDIDLTKCIFCGFCEEACPVDAVVETRV. 8 residues coordinate [4Fe-4S] cluster: C62, C65, C68, C72, C101, C104, C107, and C111.

This sequence belongs to the complex I 23 kDa subunit family. As to quaternary structure, NDH-1 is composed of 14 different subunits. Subunits NuoA, H, J, K, L, M, N constitute the membrane sector of the complex. [4Fe-4S] cluster is required as a cofactor.

It is found in the cell inner membrane. The catalysed reaction is a quinone + NADH + 5 H(+)(in) = a quinol + NAD(+) + 4 H(+)(out). NDH-1 shuttles electrons from NADH, via FMN and iron-sulfur (Fe-S) centers, to quinones in the respiratory chain. The immediate electron acceptor for the enzyme in this species is believed to be ubiquinone. Couples the redox reaction to proton translocation (for every two electrons transferred, four hydrogen ions are translocated across the cytoplasmic membrane), and thus conserves the redox energy in a proton gradient. The sequence is that of NADH-quinone oxidoreductase subunit I from Aromatoleum aromaticum (strain DSM 19018 / LMG 30748 / EbN1) (Azoarcus sp. (strain EbN1)).